Here is a 146-residue protein sequence, read N- to C-terminus: Alpha-amylase inhibitor BMAI-1 (146 aa).

A signal peptide spans 1–14; the sequence is PTSVAVDQGSMVSN. N-linked (GlcNAc...) asparagine glycosylation occurs at asparagine 125.

It belongs to the protease inhibitor I6 (cereal trypsin/alpha-amylase inhibitor) family. Monomer. Five disulfide bonds, which are essential for the inhibitor activity, are probably present. In terms of processing, glycosylated. In terms of tissue distribution, endosperm.

The protein resides in the secreted. Its function is as follows. Could be involved in insect defense mechanisms. Inhibits insect-type alpha-amylase. The sequence is that of Alpha-amylase inhibitor BMAI-1 (IAM1) from Hordeum vulgare (Barley).